The following is a 406-amino-acid chain: DNA primase DnaG (406 aa).

The Toprim domain occupies 167-253 (DAVVIVEGRA…CVEDLSRRTV (87 aa)). Residues Glu173, Asp215, and Asp217 each coordinate Mg(2+). A disordered region spans residues 259–309 (NKTPASAAAPIATTQSETAATDGSATPAPTPEPAPDTAPSPDSDGDDTEAA). The segment covering 261–272 (TPASAAAPIATT) has biased composition (low complexity). The span at 286–296 (APTPEPAPDTA) shows a compositional bias: pro residues.

This sequence belongs to the archaeal DnaG primase family. Forms a ternary complex with MCM helicase and DNA. It depends on Mg(2+) as a cofactor.

The catalysed reaction is ssDNA + n NTP = ssDNA/pppN(pN)n-1 hybrid + (n-1) diphosphate.. In terms of biological role, RNA polymerase that catalyzes the synthesis of short RNA molecules used as primers for DNA polymerase during DNA replication. The chain is DNA primase DnaG from Halobacterium salinarum (strain ATCC 29341 / DSM 671 / R1).